A 529-amino-acid chain; its full sequence is Arginine--tRNA ligase (529 aa).

Positions 113–123 (ANPTGPLHIGH) match the 'HIGH' region motif.

Belongs to the class-I aminoacyl-tRNA synthetase family. As to quaternary structure, monomer.

It is found in the cytoplasm. The catalysed reaction is tRNA(Arg) + L-arginine + ATP = L-arginyl-tRNA(Arg) + AMP + diphosphate. The sequence is that of Arginine--tRNA ligase from Campylobacter curvus (strain 525.92).